We begin with the raw amino-acid sequence, 245 residues long: Protein canopy homolog 4 (245 aa).

Positions 1-27 (MCGLRFIMGPVRLEILLFILAAYGAWA) are cleaved as a signal peptide. 3 disulfides stabilise this stretch: Cys44-Cys202, Cys47-Cys190, and Cys100-Cys162. A disordered region spans residues 207–245 (WTGKEKISDGQEEADDEEEEEEEEITKTSGNPKHDPEDL). Positions 209-237 (GKEKISDGQEEADDEEEEEEEEITKTSGN) form a coiled coil. A compositionally biased stretch (acidic residues) spans 216–230 (GQEEADDEEEEEEEE).

Belongs to the canopy family. In terms of assembly, interacts with TLR4. As to expression, highly expressed in lung, spleen, thymus, and uterus. Moderately expressed in kidney, stomach and placenta. Weakly expressed in brain, heart, liver, small intestine, skeletal muscle and testis.

The protein resides in the secreted. Functionally, plays a role in the regulation of the cell surface expression of TLR4. The polypeptide is Protein canopy homolog 4 (Cnpy4) (Mus musculus (Mouse)).